Reading from the N-terminus, the 507-residue chain is MITLTPGHLTLPQLRRIARESVQLQLDPASFAKIDAGAKAVADIAAKGEPAYGINTGFGRLASTHIPHDQLELLQKNLVLSHAVGVGEPMARSSVRLLMALKLSSLGRGHSGIRREVMDALITLFNADVLPLIPVKGSVGASGDLAPLAHMSAVLLGVGEVFIRGERASALDGLRVAGLAPLTLQAKEGLALLNGTQASTALALDNMFAIEDLYRTALVAGALSVDAAAGSVKPFDARIHELRGHRGQIDAAASYRELLEGSPINQSHRDCDKVQDPYSLRCQPQVMGACLDQMRHAADVLLVEANAVSDNPLIFPDTGEVLSGGNFHAEPVAFAADNLALAAAEIGALAERRIALLIDATLSGLPPFLVRDGGVNSGFMIAHVTAAALASENKTLAHPASVDSLPTSANQEDHVSMATFAARKLADIADNTKHILAIELLAAAQGVDLRAPHHTSPKLAPVMETIRSKVAHYELDHYFAPDIAVIAQLVGERAFAKIAPFSFASEQ.

A cross-link (5-imidazolinone (Ala-Gly)) is located at residues 141–143 (ASG). A 2,3-didehydroalanine (Ser) modification is found at Ser-142.

It belongs to the PAL/histidase family. Contains an active site 4-methylidene-imidazol-5-one (MIO), which is formed autocatalytically by cyclization and dehydration of residues Ala-Ser-Gly.

It is found in the cytoplasm. It carries out the reaction L-histidine = trans-urocanate + NH4(+). Its pathway is amino-acid degradation; L-histidine degradation into L-glutamate; N-formimidoyl-L-glutamate from L-histidine: step 1/3. In Burkholderia vietnamiensis (strain G4 / LMG 22486) (Burkholderia cepacia (strain R1808)), this protein is Histidine ammonia-lyase.